Consider the following 146-residue polypeptide: Ataxin-7-like protein 1 (146 aa).

2 disordered regions span residues 1 to 27 (MTSERSRIPCLSAAAAEGTGKKQQEGT) and 125 to 146 (KRNASISWSGAESRQALEQRQV). The segment covering 127–138 (NASISWSGAESR) has biased composition (polar residues).

The protein is Ataxin-7-like protein 1 (Atxn7l1) of Mus musculus (Mouse).